The primary structure comprises 532 residues: Bone morphogenetic protein receptor type-1A (532 aa).

Residues 1 to 23 (MTQLYTYIRLLGACLFIISHVQG) form the signal peptide. The Extracellular segment spans residues 24-152 (QNLDSMLHGT…IGPFFDGSVR (129 aa)). Disulfide bonds link C61/C82, C63/C67, and C76/C100. N73 carries an N-linked (GlcNAc...) asparagine glycan. The interval 107-109 (DFQ) is mediates specificity for BMP ligand. Disulfide bonds link C110–C124 and C125–C130. A helical transmembrane segment spans residues 153–176 (WLAVLISMAVCIVAMIVFSSCFCY). The Cytoplasmic portion of the chain corresponds to 177-532 (KHYCKSISSR…KMVESQDVKI (356 aa)). One can recognise a GS domain in the interval 204–233 (ESLKDLIDQSQSSGSGSGLPLLVQRTIAKQ). Residues 234–525 (IQMVRQVGKG…RIKKTLAKMV (292 aa)) form the Protein kinase domain. Residues 240–248 (VGKGRYGEV) and K261 contribute to the ATP site. D362 functions as the Proton acceptor in the catalytic mechanism.

This sequence belongs to the protein kinase superfamily. TKL Ser/Thr protein kinase family. TGFB receptor subfamily. In terms of assembly, interacts with low affinity with GDF5; positively regulates chondrocyte differentiation. Interacts with BMP4. Interacts with SCUBE3. Interacts with TSC22D1/TSC-22. Interacts with BMP2; the interaction may induce HAMP expression. Interacts with BMP6. Interacts with heterodimers composed of BMP2 and BMP6 in vitro; the interaction may induce HAMP expression. Mg(2+) is required as a cofactor. The cofactor is Mn(2+). In terms of processing, glycosylated.

Its subcellular location is the cell membrane. It is found in the cell surface. The catalysed reaction is L-threonyl-[receptor-protein] + ATP = O-phospho-L-threonyl-[receptor-protein] + ADP + H(+). It catalyses the reaction L-seryl-[receptor-protein] + ATP = O-phospho-L-seryl-[receptor-protein] + ADP + H(+). Its function is as follows. On ligand binding, forms a receptor complex consisting of two type II and two type I transmembrane serine/threonine kinases. Type II receptors phosphorylate and activate type I receptors which autophosphorylate, then bind and activate SMAD transcriptional regulators. Receptor for BMP2, BMP4, GDF5 and GDF6. Positively regulates chondrocyte differentiation through GDF5 interaction. Mediates induction of adipogenesis by GDF6. May promote the expression of HAMP, potentially via its interaction with BMP2. The polypeptide is Bone morphogenetic protein receptor type-1A (Bmpr1a) (Rattus norvegicus (Rat)).